Reading from the N-terminus, the 163-residue chain is Nucleotide-binding protein RHA1_ro01989 (163 aa).

The protein belongs to the YajQ family.

In terms of biological role, nucleotide-binding protein. The chain is Nucleotide-binding protein RHA1_ro01989 from Rhodococcus jostii (strain RHA1).